The primary structure comprises 365 residues: 4-hydroxy-3-methylbut-2-en-1-yl diphosphate synthase (flavodoxin) (365 aa).

The [4Fe-4S] cluster site is built by C265, C268, C300, and E307.

Belongs to the IspG family. [4Fe-4S] cluster is required as a cofactor.

It catalyses the reaction (2E)-4-hydroxy-3-methylbut-2-enyl diphosphate + oxidized [flavodoxin] + H2O + 2 H(+) = 2-C-methyl-D-erythritol 2,4-cyclic diphosphate + reduced [flavodoxin]. The protein operates within isoprenoid biosynthesis; isopentenyl diphosphate biosynthesis via DXP pathway; isopentenyl diphosphate from 1-deoxy-D-xylulose 5-phosphate: step 5/6. Functionally, converts 2C-methyl-D-erythritol 2,4-cyclodiphosphate (ME-2,4cPP) into 1-hydroxy-2-methyl-2-(E)-butenyl 4-diphosphate. In Bacillus mycoides (strain KBAB4) (Bacillus weihenstephanensis), this protein is 4-hydroxy-3-methylbut-2-en-1-yl diphosphate synthase (flavodoxin).